Reading from the N-terminus, the 423-residue chain is MSFTTRSTTFSTNYRSLGSVRTPSQRVRPASSAASVYAGAGGSGSRISVSRSVWGGSVGSAGLAGMGGIQTEKETMQDLNDRLASYLDKVKSLETENRRLESKIREHLEKKGPQGVRDWGHYFKIIEDLRAQIFANSVDNARIVLQIDNARLAADDFRVKYETELAMRQSVESDIHGLRKVVDDTNITRLQLETEIEALKEELLFMKKNHEEEVQGLEAQIASSGLTVEVDAPKSQDLSKIMADIRAQYEALAQKNREELDKYWSQQIEESTTVVTTKSAEIRDAETTLTELRRTLQTLEIDLDSMKNQNINLENSLGDVEARYKAQMEQLNGVLLHLESELAQTRAEGQRQAQEYEALLNIKVKLEAEIATYRRLLEDGEDFSLNDALDSSNSMQTVQKTTTRKIVDGRVVSETNDTRVLRH.

Serine 2 bears the N-acetylserine mark. The head stretch occupies residues 2–71 (SFTTRSTTFS…GLAGMGGIQT (70 aa)). Phosphoserine occurs at positions 7, 11, 16, and 19. Phosphoserine; alternate is present on residues serine 31 and serine 32. Residues serine 31 and serine 32 are each glycosylated (O-linked (GlcNAc) serine; alternate). Position 35 is a phosphoserine (serine 35). Position 37 is a phosphotyrosine (tyrosine 37). At serine 43 the chain carries Phosphoserine. The residue at position 46 (arginine 46) is an Omega-N-methylarginine. Residue serine 50 is modified to Phosphoserine; alternate. Serine 50 is a glycosylation site (O-linked (GlcNAc) serine; alternate). Serine 52 is subject to Phosphoserine; by MAPKAPK2 and MAPKAPK3. Serine 57 and serine 60 each carry phosphoserine. Positions 62 to 366 (GLAGMGGIQT…EALLNIKVKL (305 aa)) are necessary for interaction with PNN. Positions 69 to 121 (IQTEKETMQDLNDRLASYLDKVKSLETENRRLESKIREHLEKKGPQGVRDWGH) are interaction with TRADD. Positions 72–107 (EKETMQDLNDRLASYLDKVKSLETENRRLESKIREH) are coil 1A. One can recognise an IF rod domain in the interval 72 to 384 (EKETMQDLND…RLLEDGEDFS (313 aa)). Lysine 73 participates in a covalent cross-link: Glycyl lysine isopeptide (Lys-Gly) (interchain with G-Cter in SUMO2). Phosphoserine occurs at positions 85 and 92. The tract at residues 108–125 (LEKKGPQGVRDWGHYFKI) is linker 1. Position 124 is an N6-acetyllysine (lysine 124). Positions 126 to 217 (IEDLRAQIFA…KNHEEEVQGL (92 aa)) are coil 1B. A phosphoserine mark is found at serine 137 and serine 170. The segment at 218–241 (EAQIASSGLTVEVDAPKSQDLSKI) is linker 12. Residues 236-384 (QDLSKIMADI…RLLEDGEDFS (149 aa)) form an interaction with DNAJB6 region. A Glycyl lysine isopeptide (Lys-Gly) (interchain with G-Cter in SUMO2) cross-link involves residue lysine 240. A coil 2 region spans residues 242–380 (MADIRAQYEA…ATYRRLLEDG (139 aa)). The residue at position 295 (threonine 295) is a Phosphothreonine. Serine 316 bears the Phosphoserine mark. Glycyl lysine isopeptide (Lys-Gly) (interchain with G-Cter in SUMO2) cross-links involve residues lysine 363 and lysine 365. The tract at residues 381-423 (EDFSLNDALDSSNSMQTVQKTTTRKIVDGRVVSETNDTRVLRH) is tail. Phosphoserine occurs at positions 384, 391, 392, and 394. At threonine 397 the chain carries Phosphothreonine.

Belongs to the intermediate filament family. As to quaternary structure, heterotetramer of two type I and two type II keratins. KRT18 associates with KRT8. Interacts with PLEC isoform 1C, when in a heterodimer with KRT8. Interacts with PNN and mutated CFTR. Interacts with YWHAE, YWHAH and YWHAZ only when phosphorylated. Interacts with the thrombin-antithrombin complex. Interacts with DNAJB6, TCHP and TRADD. Interacts with FAM83H. Interacts with EPPK1. Interacts with PKP1 and PKP2. In terms of processing, phosphorylation increases by IL-6. Post-translationally, proteolytically cleaved by caspases during epithelial cell apoptosis. Cleavage occurs at Asp-231 by either caspase-3, caspas-6 or caspase-7. O-GlcNAcylation increases solubility, and decreases stability by inducing proteasomal degradation. In terms of tissue distribution, expressed in endoderm, intestinal epithelial cells and in most extraembryonic tissues.

The protein localises to the nucleus matrix. The protein resides in the cytoplasm. It is found in the perinuclear region. It localises to the nucleus. Its subcellular location is the nucleolus. When phosphorylated, plays a role in filament reorganization. Involved in the delivery of mutated CFTR to the plasma membrane. Involved in the uptake of thrombin-antithrombin complexes by hepatic cells. Together with KRT8, is involved in interleukin-6 (IL-6)-mediated barrier protection. In Mus musculus (Mouse), this protein is Keratin, type I cytoskeletal 18 (Krt18).